The chain runs to 80 residues: Phycocyanin-645 alpha-1 chain (80 aa).

R16 is a (2R,3E)-phycocyanobilin binding site. 4 residues coordinate mesobiliverdin: C18, Q24, Y25, and K40. The 15,16-dihydrobiliverdin site is built by P71 and I73.

The protein belongs to the phycoerythrin family. Heterotetramer of 2 different alpha chains and 2 identical beta chains which form 2 alpha-beta heterodimers within the heterotetramer. In terms of processing, contains one phycocyanobilin chromophore, one mesobiliverdin chromophore and one 15,16-dihydrobiliverdin chromophore with binding mediated by both the alpha and beta subunits.

The protein localises to the plastid. It is found in the chloroplast thylakoid membrane. In terms of biological role, light-harvesting photosynthetic tetrapyrrole chromophore-protein from the phycobiliprotein complex. The protein is Phycocyanin-645 alpha-1 chain of Chroomonas sp.